Reading from the N-terminus, the 304-residue chain is Dihydroorotate dehydrogenase B (NAD(+)), catalytic subunit (304 aa).

Residues serine 21 and 45 to 46 (KA) contribute to the FMN site. Residues lysine 45 and 69–73 (NAIGL) each bind substrate. 2 residues coordinate FMN: asparagine 99 and asparagine 127. Asparagine 127 is a substrate binding site. Cysteine 130 acts as the Nucleophile in catalysis. FMN-binding residues include lysine 165 and isoleucine 191. 192 to 193 (NT) lines the substrate pocket. Residues glycine 217, 243–244 (GG), and 265–266 (GT) each bind FMN.

This sequence belongs to the dihydroorotate dehydrogenase family. Type 1 subfamily. In terms of assembly, heterotetramer of 2 PyrK and 2 PyrD type B subunits. FMN serves as cofactor.

It is found in the cytoplasm. It catalyses the reaction (S)-dihydroorotate + NAD(+) = orotate + NADH + H(+). It participates in pyrimidine metabolism; UMP biosynthesis via de novo pathway; orotate from (S)-dihydroorotate (NAD(+) route): step 1/1. Its function is as follows. Catalyzes the conversion of dihydroorotate to orotate with NAD(+) as electron acceptor. This is Dihydroorotate dehydrogenase B (NAD(+)), catalytic subunit (pyrD) from Listeria monocytogenes serotype 4b (strain F2365).